A 447-amino-acid polypeptide reads, in one-letter code: Phosphoglucosamine mutase (447 aa).

Catalysis depends on serine 88, which acts as the Phosphoserine intermediate. Residues serine 88, aspartate 231, aspartate 233, and aspartate 235 each coordinate Mg(2+). Serine 88 carries the phosphoserine modification.

Belongs to the phosphohexose mutase family. Mg(2+) is required as a cofactor. Activated by phosphorylation.

It carries out the reaction alpha-D-glucosamine 1-phosphate = D-glucosamine 6-phosphate. Functionally, catalyzes the conversion of glucosamine-6-phosphate to glucosamine-1-phosphate. In Methanococcus maripaludis (strain C7 / ATCC BAA-1331), this protein is Phosphoglucosamine mutase.